The following is a 409-amino-acid chain: Elongation factor Tu, chloroplastic (409 aa).

Residues 10 to 214 (KPHVNIGTIG…AVDEYIPTPE (205 aa)) enclose the tr-type G domain. A G1 region spans residues 19–26 (GHVDHGKT). 19-26 (GHVDHGKT) lines the GTP pocket. T26 lines the Mg(2+) pocket. Residues 60-64 (GITIN) form a G2 region. The interval 81–84 (DCPG) is G3. Residues 81–85 (DCPGH) and 136–139 (NKED) each bind GTP. The interval 136–139 (NKED) is G4. The G5 stretch occupies residues 174–176 (SAL).

It belongs to the TRAFAC class translation factor GTPase superfamily. Classic translation factor GTPase family. EF-Tu/EF-1A subfamily.

It localises to the plastid. It is found in the chloroplast. It catalyses the reaction GTP + H2O = GDP + phosphate + H(+). GTP hydrolase that promotes the GTP-dependent binding of aminoacyl-tRNA to the A-site of ribosomes during protein biosynthesis. This is Elongation factor Tu, chloroplastic (tufA) from Trieres chinensis (Marine centric diatom).